The sequence spans 495 residues: Muscle LIM protein Mlp84B (495 aa).

Residues 12–63 (CPRCGKSVYAAEERLAGGYVFHKNCFKCGMCNKSLDSTNCTEHERELYCKTC) form the LIM zinc-binding 1 domain. Positions 66–71 (RKFGPK) match the Nuclear localization signal motif. The LIM zinc-binding 2 domain occupies 120-172 (CPRCGGYVYAAEQMLARGRSWHKECFKCGTCKKGLDSILCCEAPDKNIYCKGC). The Nuclear localization signal motif lies at 175–180 (KKFGPK). 3 LIM zinc-binding domains span residues 222–274 (CPRC…CRTC), 325–377 (CPRC…CRAC), and 421–473 (CPRC…CRAC).

As to expression, in the embryo, expression is restricted to the somatic, visceral, and pharyngeal muscles. Within the somatic musculature, expression is localized at the ends of muscles fibers at the point of attachment to the epidermis (at protein level). There is no expression in cardiac mesoderm or in fat body.

It is found in the cytoplasm. The protein localises to the nucleus. Its function is as follows. Plays a role in cell differentiation late in myogenesis. Transcription factor Mef2 is essential for expression. This Drosophila melanogaster (Fruit fly) protein is Muscle LIM protein Mlp84B.